The sequence spans 145 residues: Putative pre-16S rRNA nuclease (145 aa).

The protein belongs to the YqgF nuclease family.

The protein localises to the cytoplasm. Could be a nuclease involved in processing of the 5'-end of pre-16S rRNA. The protein is Putative pre-16S rRNA nuclease of Microcystis aeruginosa (strain NIES-843 / IAM M-2473).